Here is a 499-residue protein sequence, read N- to C-terminus: Putative protease Do-like 12, mitochondrial (499 aa).

The transit peptide at 1–24 directs the protein to the mitochondrion; it reads MLFRSCVGMVSRYSRALLPTITIS. The interval 94–259 is serine protease; the sequence is GGSGFAIAGK…IPTPIIRHFI (166 aa). Active-site charge relay system residues include His110, Asp144, and Ser222. Residues 272–356 enclose the PDZ domain; the sequence is GSLVLSCQSM…DENILVKVLR (85 aa).

The protein belongs to the peptidase S1C family.

It localises to the mitochondrion matrix. Putative serine protease. The sequence is that of Putative protease Do-like 12, mitochondrial (DEGP12) from Arabidopsis thaliana (Mouse-ear cress).